A 120-amino-acid polypeptide reads, in one-letter code: MPRVKRGVIARARHKKVLNAAKGYRGRRKNVYRIAKQAVMKAGQYAYRDRRQRKRQFRALWIARINAGAREYGLTYSRFINGLKKSAVEVDRKVLADLAVFDKQAFAKFAELAKSGLAAA.

This sequence belongs to the bacterial ribosomal protein bL20 family.

Its function is as follows. Binds directly to 23S ribosomal RNA and is necessary for the in vitro assembly process of the 50S ribosomal subunit. It is not involved in the protein synthesizing functions of that subunit. The sequence is that of Large ribosomal subunit protein bL20 from Methylobacillus flagellatus (strain ATCC 51484 / DSM 6875 / VKM B-1610 / KT).